The primary structure comprises 988 residues: Protein argonaute 10 (988 aa).

The segment covering 1 to 11 (MPIRQMKDSSE) has biased composition (basic and acidic residues). Positions 1 to 103 (MPIRQMKDSS…PPSQTTSSAV (103 aa)) are disordered. The span at 41-57 (PVTVTTPATVTQSQASS) shows a compositional bias: low complexity. Basic residues predominate over residues 64–73 (NRSRRRNRGG). The 114-residue stretch at 338–451 (PVIEFVAQLL…LPMEACKIVE (114 aa)) folds into the PAZ domain. One can recognise a Piwi domain in the interval 625-946 (LLLAILPDNN…AAFRARFYLE (322 aa)).

This sequence belongs to the argonaute family. Ago subfamily. Interacts with GATA18/HAN and KNAT1/BP. Interacts with RICE1 and RICE2 that act as cofactors. Expressed in roots, stems, leaves, developing embryo, siliques, inflorescences, provascular tissue, shoot apical meristem (SAM) and adaxial (upper) sides of lateral organ primordia. Observed in the floral meristem, the adaxial side of sepal primordia, and the provascular tissue.

It is found in the cytoplasm. Its function is as follows. Involved in RNA-mediated post-transcriptional gene silencing (PTGS). Main component of the RNA-induced silencing complex (RISC) that binds to a short guide RNA such as a microRNA (miRNA) or small interfering RNA (siRNA). RISC uses the mature miRNA or siRNA as a guide for slicer-directed cleavage of homologous mRNAs to repress gene expression. Required for reliable formation of primary and axillary shoot apical meristems. Specifies leaf adaxial identity by repressing the miR165 and miR166 microRNAs in the embryonic shoot apex, in the shoot apical meristem (SAM) and leaf. Represses the microRNA miR398 which targets CCS1 chaperone mRNAs for translational inhibition. Acts as a negative regulator of AGO1 protein level. Like AGO1, is required for stem cell function and organ polarity. Unlike AGO1, is not subjected to small RNA-mediated repression itself. Essential for multiple processes in development. Coregulates, with GATA18/HAN, the shoot apical meristem (SAM) organization. The polypeptide is Protein argonaute 10 (Arabidopsis thaliana (Mouse-ear cress)).